The chain runs to 324 residues: Cyclin-dependent kinase 1 (324 aa).

Positions Tyr-4 to Phe-307 constitute a Protein kinase domain. ATP-binding positions include Ile-10 to Val-18 and Lys-34. Thr-14 bears the Phosphothreonine mark. Tyr-15 carries the post-translational modification Phosphotyrosine. Catalysis depends on Asp-148, which acts as the Proton acceptor. Thr-181 is modified (phosphothreonine; by CAK).

The protein belongs to the protein kinase superfamily. CMGC Ser/Thr protein kinase family. CDC2/CDKX subfamily. As to quaternary structure, forms a stable but non-covalent complex with a regulatory subunit (SUC1) and with a cyclin.

It carries out the reaction L-seryl-[protein] + ATP = O-phospho-L-seryl-[protein] + ADP + H(+). The enzyme catalyses L-threonyl-[protein] + ATP = O-phospho-L-threonyl-[protein] + ADP + H(+). Its activity is regulated as follows. Phosphorylation at Thr-14 or Tyr-15 inactivates the enzyme, while phosphorylation at Thr-181 activates it. Its function is as follows. Cyclin-dependent kinase that acts as a master regulator of the mitotic and meiotic cell cycles. In Ajellomyces capsulatus (Darling's disease fungus), this protein is Cyclin-dependent kinase 1.